A 921-amino-acid polypeptide reads, in one-letter code: Isoleucine--tRNA ligase (921 aa).

Residues 57-67 (PYANGELHMGH) carry the 'HIGH' region motif. Glu-552 serves as a coordination point for L-isoleucyl-5'-AMP. Residues 593 to 597 (KMSKS) carry the 'KMSKS' region motif. Lys-596 serves as a coordination point for ATP. Zn(2+) contacts are provided by Cys-888, Cys-891, Cys-908, and Cys-911.

Belongs to the class-I aminoacyl-tRNA synthetase family. IleS type 1 subfamily. Monomer. Zn(2+) serves as cofactor.

The protein localises to the cytoplasm. The enzyme catalyses tRNA(Ile) + L-isoleucine + ATP = L-isoleucyl-tRNA(Ile) + AMP + diphosphate. Its function is as follows. Catalyzes the attachment of isoleucine to tRNA(Ile). As IleRS can inadvertently accommodate and process structurally similar amino acids such as valine, to avoid such errors it has two additional distinct tRNA(Ile)-dependent editing activities. One activity is designated as 'pretransfer' editing and involves the hydrolysis of activated Val-AMP. The other activity is designated 'posttransfer' editing and involves deacylation of mischarged Val-tRNA(Ile). This Listeria innocua serovar 6a (strain ATCC BAA-680 / CLIP 11262) protein is Isoleucine--tRNA ligase.